Here is a 440-residue protein sequence, read N- to C-terminus: Chitinase-like protein Idgf5 (440 aa).

A signal peptide spans 1–27 (MRNKMIYFNFHLFVIIFANLQIFQVQA). The 412-residue stretch at 28-439 (ANIFCYYDTQ…KSIHNAFKKF (412 aa)) folds into the GH18 domain. Residues Cys-32 and Cys-56 are joined by a disulfide bond. Asn-126, Asn-283, and Asn-403 each carry an N-linked (GlcNAc...) asparagine glycan. The cysteines at positions 340 and 421 are disulfide-linked.

The protein belongs to the glycosyl hydrolase 18 family. IDGF subfamily. Post-translationally, glycosylated.

It localises to the secreted. In terms of biological role, cooperates with insulin-like peptides to stimulate the proliferation, polarization and motility of imaginal disk cells. May act by stabilizing the binding of insulin-like peptides to its receptor through a simultaneous interaction with both molecules to form a multiprotein signaling complex. This is Chitinase-like protein Idgf5 (Idgf5) from Glossina morsitans morsitans (Savannah tsetse fly).